The chain runs to 1463 residues: Nucleoporin NUP152 (1463 aa).

Disordered regions lie at residues 1 to 199, 339 to 568, and 609 to 1064; these read MDPP…GRPG, GIPD…ELPA, and TTKK…FGNT. 6 stretches are compositionally biased toward polar residues: residues 32 to 42, 81 to 92, 144 to 155, 175 to 191, 367 to 378, and 416 to 472; these read STNSNSVTANA, GPSSKLSQSVSA, TSSKATSFSGAP, TTYT…QSFP, PSSSTFTHTASP, and PAKT…SSNI. Over residues 481 to 498 the composition is skewed to acidic residues; sequence KDEDNESDTGSEAEAEDE. Low complexity-rich tracts occupy residues 511–523 and 616–630; these read GASS…GGES and AAAP…TPTT. 3 stretches are compositionally biased toward polar residues: residues 651–664, 673–689, and 720–746; these read IFGS…TSIP, PATS…TSAA, and TTES…TQPQ. The FXFG 1 repeat unit spans residues 729–732; sequence FQFG. The span at 753 to 768 shows a compositional bias: low complexity; that stretch reads KPPSTETPTEKPATTS. Over residues 777 to 789 the composition is skewed to polar residues; the sequence is PATTSSLFGSATT. The span at 803 to 813 shows a compositional bias: low complexity; the sequence is TTTPADKPTTT. Residues 814 to 828 show a composition bias toward polar residues; that stretch reads NLFGSTSTQATSGSD. Residues 835 to 838 form an FXFG 2 repeat; sequence FAFG. A compositionally biased stretch (polar residues) spans 840–863; the sequence is TTESKPTTSLFGSTTPAPATSTEN. The segment covering 870-881 has biased composition (low complexity); sequence ATTTSATPATNT. Composition is skewed to polar residues over residues 900–923, 940–961, 968–987, 998–1029, and 1037–1055; these read GSST…STEQ, GSTS…TMTE, SIST…STTE, STEQ…STEQ, and PAST…TTEN. One copy of the FXFG 3 repeat lies at 910–913; the sequence is FQFG. FXFG repeat units follow at residues 1074 to 1077, 1127 to 1130, 1141 to 1144, and 1152 to 1155; these read FNFG and FTFG. Disordered stretches follow at residues 1155–1174 and 1179–1217; these read GASS…PIFS and QPSS…KHVP. Low complexity predominate over residues 1156–1170; the sequence is ASSDSSNASNNASSA. The stretch at 1173–1176 is one FXFG 8 repeat; it reads FSFG. A compositionally biased stretch (polar residues) spans 1179–1199; it reads QPSSTPLFGQNNPPAASNIFA. Residues 1236 to 1239 form an FXFG 9 repeat; sequence FTFG. A compositionally biased stretch (low complexity) spans 1240-1271; it reads GASSLATTPAASTPEPSAANAAAAGEDQGASA. Disordered stretches follow at residues 1240 to 1335 and 1416 to 1463; these read GASS…PWKV and AALE…DEKK. The region spanning 1289–1427 is the RanBD1 domain; the sequence is GEEDESVVHE…LEEHKKANEK (139 aa). Positions 1418-1463 are enriched in basic and acidic residues; sequence LEEHKKANEKKDGEKNEESEKKDEKQEEKKNEEKKDEKEEKKDEKK.

As to quaternary structure, the nuclear pore complex (NPC) constitutes the exclusive means of nucleocytoplasmic transport. NPCs allow the passive diffusion of ions and small molecules and the active, nuclear transport receptor-mediated bidirectional transport of macromolecules such as proteins, RNAs, ribonucleoparticles (RNPs), and ribosomal subunits across the nuclear envelope. The 55-60 MDa NPC is composed of at least 28 different subunits: AMO1, ELYS, GLE1, GLE2, MLP1, NDC1, NIC96, NSP1, NUP133, NUP145, NUP152, NUP159, NUP170, NUP188, NUP192, NUP37, NUP49, NUP53, NUP56, NUP57, NUP82, NUP84, NUP85, POM152, POM33, POM34, SEC13 and SEH1. Due to its 8-fold rotational symmetry, all subunits are present with 8 copies or multiples thereof.

The protein localises to the nucleus. Its subcellular location is the nuclear pore complex. The protein resides in the nucleus membrane. Functionally, functions as a component of the nuclear pore complex (NPC). NPC components, collectively referred to as nucleoporins (NUPs), can play the role of both NPC structural components and of docking or interaction partners for transiently associated nuclear transport factors. Active directional transport is assured by both, a Phe-Gly (FG) repeat affinity gradient for these transport factors across the NPC and a transport cofactor concentration gradient across the nuclear envelope (GSP1 and GSP2 GTPases associated predominantly with GTP in the nucleus, with GDP in the cytoplasm). The protein is Nucleoporin NUP152 (NUP152) of Chaetomium thermophilum (strain DSM 1495 / CBS 144.50 / IMI 039719) (Thermochaetoides thermophila).